Here is a 474-residue protein sequence, read N- to C-terminus: tRNA-2-methylthio-N(6)-dimethylallyladenosine synthase (474 aa).

The MTTase N-terminal domain occupies K3–G120. [4Fe-4S] cluster is bound by residues C12, C49, C83, C157, C161, and C164. Residues R143–A375 enclose the Radical SAM core domain. Positions R378–R441 constitute a TRAM domain.

It belongs to the methylthiotransferase family. MiaB subfamily. As to quaternary structure, monomer. [4Fe-4S] cluster serves as cofactor.

The protein localises to the cytoplasm. It carries out the reaction N(6)-dimethylallyladenosine(37) in tRNA + (sulfur carrier)-SH + AH2 + 2 S-adenosyl-L-methionine = 2-methylsulfanyl-N(6)-dimethylallyladenosine(37) in tRNA + (sulfur carrier)-H + 5'-deoxyadenosine + L-methionine + A + S-adenosyl-L-homocysteine + 2 H(+). Catalyzes the methylthiolation of N6-(dimethylallyl)adenosine (i(6)A), leading to the formation of 2-methylthio-N6-(dimethylallyl)adenosine (ms(2)i(6)A) at position 37 in tRNAs that read codons beginning with uridine. This Escherichia coli O81 (strain ED1a) protein is tRNA-2-methylthio-N(6)-dimethylallyladenosine synthase.